A 402-amino-acid chain; its full sequence is Acetate kinase (402 aa).

Mg(2+) is bound at residue Asn7. ATP is bound at residue Lys14. Arg95 lines the substrate pocket. Asp152 (proton donor/acceptor) is an active-site residue. Residues 212 to 216 (HLGNG), 286 to 288 (DMR), and 334 to 338 (GIGEN) each bind ATP. Glu388 serves as a coordination point for Mg(2+).

This sequence belongs to the acetokinase family. In terms of assembly, homodimer. The cofactor is Mg(2+). Requires Mn(2+) as cofactor.

The protein localises to the cytoplasm. The enzyme catalyses acetate + ATP = acetyl phosphate + ADP. It functions in the pathway metabolic intermediate biosynthesis; acetyl-CoA biosynthesis; acetyl-CoA from acetate: step 1/2. Functionally, catalyzes the formation of acetyl phosphate from acetate and ATP. Can also catalyze the reverse reaction. The polypeptide is Acetate kinase (Nitratidesulfovibrio vulgaris (strain ATCC 29579 / DSM 644 / CCUG 34227 / NCIMB 8303 / VKM B-1760 / Hildenborough) (Desulfovibrio vulgaris)).